The sequence spans 456 residues: Shufflon protein D' (456 aa).

Residues 1–361 (MKKYDRGWAS…TGAILSCQSG (361 aa)) are constant region. The tract at residues 362–456 (TWRKSNSGST…KCSYVVACQN (95 aa)) is variable region.

The polypeptide is Shufflon protein D' (Escherichia coli).